A 102-amino-acid chain; its full sequence is Protein isd11 (102 aa).

It belongs to the complex I LYR family.

Its subcellular location is the mitochondrion. Functionally, required for mitochondrial iron-sulfur (Fe-S) protein biosynthesis. The chain is Protein isd11 (isd11) from Schizosaccharomyces pombe (strain 972 / ATCC 24843) (Fission yeast).